The primary structure comprises 241 residues: Small ribosomal subunit protein uS2 (241 aa).

Belongs to the universal ribosomal protein uS2 family.

The chain is Small ribosomal subunit protein uS2 from Yersinia pestis bv. Antiqua (strain Antiqua).